Reading from the N-terminus, the 837-residue chain is Vacuolar membrane protease (837 aa).

Residues 1–36 are Cytoplasmic-facing; the sequence is MSEEEVHDTSSEASEVFTNQPNAFVRGVRSIFGYRK. The chain crosses the membrane as a helical span at residues 37-57; it reads TSLTLFVILTIVVTAGLSFYD. The Vacuolar portion of the chain corresponds to 58 to 355; sequence NSLELTIELP…FATPISALAR (298 aa). An N-linked (GlcNAc...) asparagine glycan is attached at asparagine 143. Zn(2+)-binding residues include histidine 157 and aspartate 169. Glutamate 201 serves as the catalytic Proton acceptor. Glutamate 202, glutamate 227, and histidine 299 together coordinate Zn(2+). The helical transmembrane segment at 356 to 376 threads the bilayer; that stretch reads VNLVLLVLFPVVSTPLLFVIV. Residues 377 to 384 lie on the Cytoplasmic side of the membrane; sequence KYKKWKLR. The chain crosses the membrane as a helical span at residues 385-405; the sequence is VTNFLGVPLAMGLAVAVGQVG. At 406–415 the chain is on the vacuolar side; sequence NPMLVSSHPM. A helical transmembrane segment spans residues 416 to 436; it reads MVVATTTSIVVLVYYVVLNGV. Residues 437–446 lie on the Cytoplasmic side of the membrane; that stretch reads DWVNTSSDQK. A helical membrane pass occupies residues 447 to 467; the sequence is LVTMIEVSFVYWVVLVYVTWS. Topologically, residues 468-474 are vacuolar; the sequence is GGDHTGE. A helical membrane pass occupies residues 475–495; that stretch reads FGVTVLFFVQASTSLLGLIGW. The Cytoplasmic portion of the chain corresponds to 496–539; it reads TFTRVRGGDEPLLSGEEERYGTEDERDTEKPLVEHNYDWSLQYL. A helical transmembrane segment spans residues 540-560; sequence LIVPVSSLVVYNSGWLVLEGV. Residue asparagine 561 is glycosylated (N-linked (GlcNAc...) asparagine). Residues 561 to 572 lie on the Vacuolar side of the membrane; the sequence is NKTVQESLASEH. A helical membrane pass occupies residues 573 to 593; it reads LIYWIVVVFSQFLVLPVVPFI. The Cytoplasmic segment spans residues 594 to 598; it reads TKFNR. Residues 599–619 form a helical membrane-spanning segment; sequence YIVLGLSVVAVVGVLMSMAVH. The Vacuolar portion of the chain corresponds to 620-837; sequence PFNQGSPMKL…LVGVVKHVDV (218 aa). A glycan (N-linked (GlcNAc...) asparagine) is linked at asparagine 689.

This sequence belongs to the peptidase M28 family. The cofactor is Zn(2+).

Its subcellular location is the vacuole membrane. Its function is as follows. May be involved in vacuolar sorting and osmoregulation. The chain is Vacuolar membrane protease from Candida albicans (strain WO-1) (Yeast).